Reading from the N-terminus, the 448-residue chain is Phosphoglucosamine mutase (448 aa).

S100 functions as the Phosphoserine intermediate in the catalytic mechanism. S100, D240, D242, and D244 together coordinate Mg(2+). Residue S100 is modified to Phosphoserine.

Belongs to the phosphohexose mutase family. It depends on Mg(2+) as a cofactor. Post-translationally, activated by phosphorylation.

It carries out the reaction alpha-D-glucosamine 1-phosphate = D-glucosamine 6-phosphate. Catalyzes the conversion of glucosamine-6-phosphate to glucosamine-1-phosphate. This chain is Phosphoglucosamine mutase, found in Bacillus cereus (strain G9842).